The primary structure comprises 393 residues: Sister chromatid cohesion protein DCC1 (393 aa).

The protein belongs to the DCC1 family. As to quaternary structure, component of the CTF18-RFC complex which consists of CTF8, CTF18, DSCC1 and the RFC complex. Interacts with CTF8 and CTF18. Interacts with DDX11.

It is found in the nucleus. Functionally, loads PCNA onto primed templates regulating velocity, spacing and restart activity of replication forks. May couple DNA replication to sister chromatid cohesion through regulation of the acetylation of the cohesin subunit SMC3. This is Sister chromatid cohesion protein DCC1 (DSCC1) from Homo sapiens (Human).